The chain runs to 150 residues: MNVILLDKIANLGNLGDQVSVKAGYARNFLLPQGKAVVANAANTEVFEARRAELEAKLAAELATATERAEKLAALEAVVIASKAGDEGKLFGSIGNRDIADAVTAAGVELAKSEVRLPLGAIRATGEFEIDVQLHAEVKAVVKLSVVAED.

The protein belongs to the bacterial ribosomal protein bL9 family.

Its function is as follows. Binds to the 23S rRNA. The protein is Large ribosomal subunit protein bL9 of Shewanella loihica (strain ATCC BAA-1088 / PV-4).